Here is a 296-residue protein sequence, read N- to C-terminus: Bifunctional protein FolD (296 aa).

NADP(+) contacts are provided by residues 166–168 (GRS), S191, and I232.

This sequence belongs to the tetrahydrofolate dehydrogenase/cyclohydrolase family. Homodimer.

The catalysed reaction is (6R)-5,10-methylene-5,6,7,8-tetrahydrofolate + NADP(+) = (6R)-5,10-methenyltetrahydrofolate + NADPH. It carries out the reaction (6R)-5,10-methenyltetrahydrofolate + H2O = (6R)-10-formyltetrahydrofolate + H(+). It participates in one-carbon metabolism; tetrahydrofolate interconversion. Functionally, catalyzes the oxidation of 5,10-methylenetetrahydrofolate to 5,10-methenyltetrahydrofolate and then the hydrolysis of 5,10-methenyltetrahydrofolate to 10-formyltetrahydrofolate. The protein is Bifunctional protein FolD of Cereibacter sphaeroides (strain ATCC 17025 / ATH 2.4.3) (Rhodobacter sphaeroides).